The sequence spans 73 residues: Large ribosomal subunit protein bL31 (73 aa).

It belongs to the bacterial ribosomal protein bL31 family. Type A subfamily. Part of the 50S ribosomal subunit.

Binds the 23S rRNA. This chain is Large ribosomal subunit protein bL31 (rpmE), found in Jannaschia sp. (strain CCS1).